We begin with the raw amino-acid sequence, 254 residues long: Gamma-glutamyl-gamma-aminobutyrate hydrolase PuuD (254 aa).

A Glutamine amidotransferase type-1 domain is found at 16 to 250 (RNRLKGHATQ…ITACQHHIAE (235 aa)). The active-site Nucleophile is Cys-114. Catalysis depends on residues His-222 and Glu-224.

The protein belongs to the peptidase C26 family. Homodimer.

It catalyses the reaction 4-(gamma-L-glutamylamino)butanoate + H2O = 4-aminobutanoate + L-glutamate. It functions in the pathway amine and polyamine degradation; putrescine degradation; 4-aminobutanoate from putrescine: step 4/4. Involved in the breakdown of putrescine via hydrolysis of the gamma-glutamyl linkage of gamma-glutamyl-gamma-aminobutyrate. This is Gamma-glutamyl-gamma-aminobutyrate hydrolase PuuD (puuD) from Escherichia coli (strain K12).